A 432-amino-acid polypeptide reads, in one-letter code: Homogentisate 1,2-dioxygenase (432 aa).

His286 functions as the Proton acceptor in the catalytic mechanism. The Fe cation site is built by His329 and Glu335. Positions 344 and 365 each coordinate homogentisate. Residue His365 coordinates Fe cation.

The protein belongs to the homogentisate dioxygenase family. In terms of assembly, hexamer; dimer of trimers. Requires Fe cation as cofactor.

The catalysed reaction is homogentisate + O2 = 4-maleylacetoacetate + H(+). It functions in the pathway amino-acid degradation; L-phenylalanine degradation; acetoacetate and fumarate from L-phenylalanine: step 4/6. Its function is as follows. Involved in the catabolism of homogentisate (2,5-dihydroxyphenylacetate or 2,5-OH-PhAc), a central intermediate in the degradation of phenylalanine and tyrosine. Catalyzes the oxidative ring cleavage of the aromatic ring of homogentisate to yield maleylacetoacetate. The sequence is that of Homogentisate 1,2-dioxygenase from Bordetella petrii (strain ATCC BAA-461 / DSM 12804 / CCUG 43448).